The sequence spans 110 residues: U1-lycotoxin-Ls1bb (110 aa).

Positions 1-20 (MKFVLLFGVLLVTLFSYSSA) are cleaved as a signal peptide. The propeptide occupies 21 to 44 (EMLDDFDQADEDELLSLIEKEEAR). Intrachain disulfides connect cysteine 47–cysteine 62, cysteine 54–cysteine 71, cysteine 61–cysteine 89, and cysteine 73–cysteine 87.

Belongs to the neurotoxin 19 (CSTX) family. 03 subfamily. As to expression, expressed by the venom gland.

It is found in the secreted. This is U1-lycotoxin-Ls1bb from Lycosa singoriensis (Wolf spider).